A 240-amino-acid polypeptide reads, in one-letter code: Uridylate kinase (240 aa).

Residue 13–16 (KLSG) participates in ATP binding. Residues 21 to 26 (GDKGFG) form an involved in allosteric activation by GTP region. Residue Gly55 participates in UMP binding. ATP contacts are provided by Gly56 and Arg60. UMP contacts are provided by residues Asp75 and 136–143 (IGNPYFST). Residues Asn164, Tyr170, and Asp173 each contribute to the ATP site.

Belongs to the UMP kinase family. As to quaternary structure, homohexamer.

The protein localises to the cytoplasm. The enzyme catalyses UMP + ATP = UDP + ADP. It functions in the pathway pyrimidine metabolism; CTP biosynthesis via de novo pathway; UDP from UMP (UMPK route): step 1/1. Its activity is regulated as follows. Allosterically activated by GTP. Inhibited by UTP. In terms of biological role, catalyzes the reversible phosphorylation of UMP to UDP. This is Uridylate kinase from Staphylococcus epidermidis (strain ATCC 35984 / DSM 28319 / BCRC 17069 / CCUG 31568 / BM 3577 / RP62A).